The sequence spans 613 residues: V-type proton ATPase catalytic subunit A isoform 2 (613 aa).

240-247 (GAFGCGKT) is a binding site for ATP.

Belongs to the ATPase alpha/beta chains family. V-ATPase is a heteromultimeric enzyme composed of a peripheral catalytic V1 complex (main components: subunits A, B, C, D, E, and F) attached to an integral membrane V0 proton pore complex (main component: the proteolipid protein).

It carries out the reaction ATP + H2O + 4 H(+)(in) = ADP + phosphate + 5 H(+)(out). Catalytic subunit of the peripheral V1 complex of vacuolar ATPase. V-ATPase vacuolar ATPase is responsible for acidifying a variety of intracellular compartments in eukaryotic cells. In Acetabularia acetabulum (Mermaid's wine glass), this protein is V-type proton ATPase catalytic subunit A isoform 2.